A 397-amino-acid chain; its full sequence is Homoserine O-acetyltransferase (397 aa).

One can recognise an AB hydrolase-1 domain in the interval 58–368 (NAVLVLHALT…EAKWGHDAFL (311 aa)). Residue serine 164 is the Nucleophile of the active site. Arginine 233 serves as a coordination point for substrate. Active-site residues include aspartate 331 and histidine 364. Substrate is bound at residue aspartate 365.

The protein belongs to the AB hydrolase superfamily. MetX family. In terms of assembly, homodimer.

It is found in the cytoplasm. The catalysed reaction is L-homoserine + acetyl-CoA = O-acetyl-L-homoserine + CoA. It participates in amino-acid biosynthesis; L-methionine biosynthesis via de novo pathway; O-acetyl-L-homoserine from L-homoserine: step 1/1. Transfers an acetyl group from acetyl-CoA to L-homoserine, forming acetyl-L-homoserine. The sequence is that of Homoserine O-acetyltransferase from Solidesulfovibrio magneticus (strain ATCC 700980 / DSM 13731 / RS-1) (Desulfovibrio magneticus).